Reading from the N-terminus, the 934-residue chain is DNA topoisomerase 1 (934 aa).

Positions 1–20 are disordered; the sequence is MADPKTKGRGSGGNGSGRRL. A Toprim domain is found at 18–142; it reads RRLVIVESPT…VKRMVFHEIT (125 aa). Mg(2+) is bound by residues E24 and D111. The region spanning 157 to 616 is the Topo IA-type catalytic domain; that stretch reads DIDLVDAQET…FYFGGDHGVP (460 aa). Residues 191–196 form an interaction with DNA region; that stretch reads SAGRVQ. Y342 (O-(5'-phospho-DNA)-tyrosine intermediate) is an active-site residue. 3 disordered regions span residues 746–765, 842–892, and 905–934; these read AAQG…RTGS, KRRG…KGDD, and LADR…AKRD. The segment covering 911–934 has biased composition (basic residues); the sequence is RGPAKRPARKAARKVPAKKAAKRD.

It belongs to the type IA topoisomerase family. Monomer. Mg(2+) is required as a cofactor.

It carries out the reaction ATP-independent breakage of single-stranded DNA, followed by passage and rejoining.. Releases the supercoiling and torsional tension of DNA, which is introduced during the DNA replication and transcription, by transiently cleaving and rejoining one strand of the DNA duplex. Introduces a single-strand break via transesterification at a target site in duplex DNA. The scissile phosphodiester is attacked by the catalytic tyrosine of the enzyme, resulting in the formation of a DNA-(5'-phosphotyrosyl)-enzyme intermediate and the expulsion of a 3'-OH DNA strand. The free DNA strand then undergoes passage around the unbroken strand, thus removing DNA supercoils. Finally, in the religation step, the DNA 3'-OH attacks the covalent intermediate to expel the active-site tyrosine and restore the DNA phosphodiester backbone. This Mycobacterium bovis (strain ATCC BAA-935 / AF2122/97) protein is DNA topoisomerase 1.